We begin with the raw amino-acid sequence, 244 residues long: MTSVPLLSMNLPRHVAIIMDGNGRWAQARDLPRIEGHRRGVTTVRTVTEMASELKLDALTLYCLSSENWKRPQAELDFLMHLLQQYLVEERRTIRDQNMRLRFIGRRDRLSDEVLKEIAKTQAVSENNTGTELVLAVDYGGRDELTRMTRQLAQQVRDGERSIDEITESLVDESLDTAGLPDVDLMIRTGGDIRISNYLLWQISYAELYFTPKCWPEFERDDFQAALDEFAGRQRRFGGLNVGA.

Asp20 is a catalytic residue. Asp20 is a binding site for Mg(2+). Substrate contacts are provided by residues 21-24 (GNGR), Trp25, Arg33, His37, and 65-67 (SSE). Asn68 functions as the Proton acceptor in the catalytic mechanism. Substrate is bound by residues Trp69, Arg71, Arg188, and 194-196 (RIS). Glu207 contributes to the Mg(2+) binding site.

The protein belongs to the UPP synthase family. As to quaternary structure, homodimer. The cofactor is Mg(2+).

Catalyzes the condensation of isopentenyl diphosphate (IPP) with allylic pyrophosphates generating different type of terpenoids. In Rhodopirellula baltica (strain DSM 10527 / NCIMB 13988 / SH1), this protein is Isoprenyl transferase.